The primary structure comprises 351 residues: Bifunctional UDP-glucose 4-epimerase and UDP-xylose 4-epimerase 3 (351 aa).

8–39 provides a ligand contact to NAD(+); that stretch reads NILVTGGAGFIGTHTVVQLLNQGFKVTIIDNL. A substrate-binding site is contributed by Ser-134. The active-site Proton acceptor is Tyr-158.

Belongs to the NAD(P)-dependent epimerase/dehydratase family. In terms of assembly, homodimer. Heterodimer. NAD(+) is required as a cofactor. In terms of tissue distribution, ubiquitous.

The catalysed reaction is UDP-alpha-D-glucose = UDP-alpha-D-galactose. It carries out the reaction UDP-beta-L-arabinopyranose = UDP-alpha-D-xylose. It functions in the pathway carbohydrate metabolism; galactose metabolism. The protein operates within nucleotide-sugar biosynthesis; UDP-L-arabinose biosynthesis; UDP-L-arabinose from UDP-alpha-D-xylose: step 1/1. It participates in cell wall biogenesis; cell wall polysaccharide biosynthesis. Strongly inhibited by UDP. In terms of biological role, catalyzes the interconversion between UDP-glucose and UDP-galactose and the interconversion between UDP-arabinose and UDP-xylose. Cooperates with UGE2 in pollen development. May preferentially act in the UDP-galactose to UDP-glucose direction, therefore displaying a role in carbohydrate catabolism. This Arabidopsis thaliana (Mouse-ear cress) protein is Bifunctional UDP-glucose 4-epimerase and UDP-xylose 4-epimerase 3 (UGE3).